A 138-amino-acid chain; its full sequence is Acidic phospholipase A2 homolog sistruxin A (138 aa).

A signal peptide spans 1–37 (MRALWIVAVLLLGVEGSLVEFETLIMKIAGRSGVWYY). Disulfide bonds link C42–C131, C44–C60, C59–C111, C65–C138, C66–C104, C73–C97, and C91–C102. The propeptide occupies 78-83 (DVYTYR). Position 84 is a pyrrolidone carboxylic acid (Q84). A propeptide spanning residues 119 to 124 (YNHKYW) is cleaved from the precursor.

The protein belongs to the phospholipase A2 family. Group II subfamily. D49 sub-subfamily. As to quaternary structure, heterodimer of an acidic subunit and a basic chain. The acidic subunit is non-toxic, without enzymatic activity and comprises 3 peptides that are cross-linked by 7 disulfide bridges. The basic subunit is toxic, has phospholipase A2 activity and is composed of a single chain. As to expression, expressed by the venom gland.

It localises to the secreted. Snake venom phospholipase A2 (PLA2) that inhibits neuromuscular transmission by blocking acetylcholine release from the nerve termini. The polypeptide is Acidic phospholipase A2 homolog sistruxin A (Sistrurus tergeminus (Western massasauga)).